We begin with the raw amino-acid sequence, 610 residues long: Elongation factor 4 (610 aa).

Residues 11–193 enclose the tr-type G domain; sequence KYIRNFSIVA…QIVTKIPAPA (183 aa). GTP contacts are provided by residues 23–28 and 140–143; these read DHGKST and NKID.

The protein belongs to the TRAFAC class translation factor GTPase superfamily. Classic translation factor GTPase family. LepA subfamily.

The protein resides in the cell membrane. It catalyses the reaction GTP + H2O = GDP + phosphate + H(+). Functionally, required for accurate and efficient protein synthesis under certain stress conditions. May act as a fidelity factor of the translation reaction, by catalyzing a one-codon backward translocation of tRNAs on improperly translocated ribosomes. Back-translocation proceeds from a post-translocation (POST) complex to a pre-translocation (PRE) complex, thus giving elongation factor G a second chance to translocate the tRNAs correctly. Binds to ribosomes in a GTP-dependent manner. The protein is Elongation factor 4 of Levilactobacillus brevis (strain ATCC 367 / BCRC 12310 / CIP 105137 / JCM 1170 / LMG 11437 / NCIMB 947 / NCTC 947) (Lactobacillus brevis).